The following is a 98-amino-acid chain: Peptide YY (98 aa).

Residues 1–28 (MVAVRRPWPVMVAMLLVLLACLGALVDA) form the signal peptide. At Ser41 the chain carries Phosphoserine. Tyr64 is modified (tyrosine amide). Residues 68-98 (EVPAALFSKLLFTDDSENLPFRSRPEGVDQW) constitute a propeptide that is removed on maturation.

This sequence belongs to the NPY family. The peptide YY form is cleaved at Pro-30 by the prolyl endopeptidase FAP (seprase) activity (in vitro) to generate peptide YY(3-36).

It localises to the secreted. Functionally, this gut peptide inhibits exocrine pancreatic secretion, has a vasoconstrictory action and inhibitis jejunal and colonic mobility. The protein is Peptide YY (Pyy) of Rattus norvegicus (Rat).